The following is a 158-amino-acid chain: UPF0260 protein RL1394 (158 aa).

This sequence belongs to the UPF0260 family.

The protein is UPF0260 protein RL1394 of Rhizobium johnstonii (strain DSM 114642 / LMG 32736 / 3841) (Rhizobium leguminosarum bv. viciae).